The primary structure comprises 204 residues: Methylthioribulose-1-phosphate dehydratase (204 aa).

Zn(2+) contacts are provided by His-94 and His-96.

This sequence belongs to the aldolase class II family. MtnB subfamily. Zn(2+) serves as cofactor.

It catalyses the reaction 5-(methylsulfanyl)-D-ribulose 1-phosphate = 5-methylsulfanyl-2,3-dioxopentyl phosphate + H2O. It functions in the pathway amino-acid biosynthesis; L-methionine biosynthesis via salvage pathway; L-methionine from S-methyl-5-thio-alpha-D-ribose 1-phosphate: step 2/6. In terms of biological role, catalyzes the dehydration of methylthioribulose-1-phosphate (MTRu-1-P) into 2,3-diketo-5-methylthiopentyl-1-phosphate (DK-MTP-1-P). The protein is Methylthioribulose-1-phosphate dehydratase of Citrobacter koseri (strain ATCC BAA-895 / CDC 4225-83 / SGSC4696).